A 224-amino-acid polypeptide reads, in one-letter code: Thymidylate kinase (224 aa).

13 to 20 (GGEGAGKS) lines the ATP pocket.

Belongs to the thymidylate kinase family.

It carries out the reaction dTMP + ATP = dTDP + ADP. In terms of biological role, phosphorylation of dTMP to form dTDP in both de novo and salvage pathways of dTTP synthesis. This is Thymidylate kinase from Agrobacterium fabrum (strain C58 / ATCC 33970) (Agrobacterium tumefaciens (strain C58)).